A 126-amino-acid chain; its full sequence is Fluoride-specific ion channel FluC (126 aa).

4 consecutive transmembrane segments (helical) span residues 4–24 (SLLS…FVGL), 35–55 (LGTI…IALF), 67–87 (FVIT…AEVI), and 97–117 (FAIA…VLGL). Residues glycine 74 and threonine 77 each coordinate Na(+).

The protein belongs to the fluoride channel Fluc/FEX (TC 1.A.43) family.

The protein localises to the cell inner membrane. The enzyme catalyses fluoride(in) = fluoride(out). With respect to regulation, na(+) is not transported, but it plays an essential structural role and its presence is essential for fluoride channel function. Its function is as follows. Fluoride-specific ion channel. Important for reducing fluoride concentration in the cell, thus reducing its toxicity. In Acinetobacter baylyi (strain ATCC 33305 / BD413 / ADP1), this protein is Fluoride-specific ion channel FluC.